The chain runs to 377 residues: Guanine nucleotide-binding protein subunit alpha-13 (377 aa).

2 S-palmitoyl cysteine lipidation sites follow: Cys14 and Cys18. The G-alpha domain maps to 47-377 (RLVKILLLGA…HDNLKQLMLQ (331 aa)). The G1 motif stretch occupies residues 50 to 63 (KILLLGAGESGKST). Residues 58 to 63 (ESGKST), Ser173, and 197 to 200 (LLAR) each bind GTP. A Mg(2+)-binding site is contributed by Ser62. The tract at residues 195-203 (DILLARRPT) is G2 motif. Position 203 (Thr203) interacts with Mg(2+). Thr203 carries the post-translational modification Phosphothreonine; by PKA. The segment at 218-227 (FKMVDVGGQR) is G3 motif. The tract at residues 287–294 (ILFLNKTD) is G4 motif. Residues 291-294 (NKTD) and Ala349 contribute to the GTP site. Residues 347–352 (TTAINT) are G5 motif.

Belongs to the G-alpha family. G(12) subfamily. G proteins are composed of 3 units; alpha, beta and gamma. The alpha chain contains the guanine nucleotide binding site. Interacts with UBXD5. Interacts with HAX1. Interacts (in GTP-bound form) with PPP5C (via TPR repeats); activates PPP5C phosphatase activity and translocates PPP5C to the cell membrane. Interacts with RGS22. Interacts with ARHGEF1. Interacts (in GTP-bound form) with ARHGEF11 (via RGS domain). Interacts (in GTP-bound form) with ARHGEF12 (via RGS domain). Interacts (in GTP-bound form) with CTNND1. Interacts with GAS2L2. Interacts with GPR35. Interacts with GPR174. Palmitoylation is critical for proper membrane localization and signaling. In terms of processing, phosphorylation on Thr-203 by PKA destabilizes the heterotrimer of alpha, beta and gamma, and inhibits Rho activation.

It localises to the membrane. Its subcellular location is the melanosome. The protein resides in the cytoplasm. It is found in the nucleus. Functionally, guanine nucleotide-binding proteins (G proteins) are involved as modulators or transducers in various transmembrane signaling systems. Activates effector molecule RhoA by binding and activating RhoGEFs (ARHGEF1/p115RhoGEF, ARHGEF11/PDZ-RhoGEF and ARHGEF12/LARG). GNA13-dependent Rho signaling subsequently regulates transcription factor AP-1 (activating protein-1). Promotes tumor cell invasion and metastasis by activating RhoA/ROCK signaling pathway. Inhibits CDH1-mediated cell adhesion in process independent from Rho activation. In lymphoid follicles, transmits P2RY8- and S1PR2-dependent signals that lead to inhibition of germinal center (GC) B cell growth and migration outside the GC niche. The sequence is that of Guanine nucleotide-binding protein subunit alpha-13 (Gna13) from Rattus norvegicus (Rat).